The chain runs to 221 residues: Protein myomaker (221 aa).

The Extracellular portion of the chain corresponds to 1-3 (MGT). The helical transmembrane segment at 4–24 (VVAKLLLPTLSSLAFLPTVSI) threads the bilayer. Residues 25-29 (ATKRR) lie on the Cytoplasmic side of the membrane. A helical membrane pass occupies residues 30–50 (FYMEAMVYLFTMFFVAFSHAC). Residues 51-64 (DGPGLSVLCFMRRD) lie on the Extracellular side of the membrane. Residues 65-85 (ILEYFSIYGTALSMWVSLMAL) traverse the membrane as a helical segment. Residues 86 to 93 (ADFDEPQR) lie on the Cytoplasmic side of the membrane. Residues 94–110 (STFTMLGVLTIAVRTFH) traverse the membrane as a helical segment. Over 111-113 (DRW) the chain is Extracellular. Residues 114 to 134 (GYGVYSGPIGTATLIIAVKWL) form a helical membrane-spanning segment. Residues 135 to 153 (KKMKEKKGLYPDKSIYTQQ) lie on the Cytoplasmic side of the membrane. The chain crosses the membrane as a helical span at residues 154-174 (IGPGLCFGALALMLRFFFEEW). Residue aspartate 175 is a topological domain, extracellular. A helical transmembrane segment spans residues 176–196 (YTYVHSFYHCALAMSFVLLLP). The Cytoplasmic segment spans residues 197 to 221 (KVNKKAGNAGAPAKLTFSTLCCTCV). 2 S-palmitoyl cysteine lipidation sites follow: cysteine 217 and cysteine 218.

The protein belongs to the TMEM8 family. In terms of assembly, interacts with MYMX. In terms of processing, palmitoylated at the C-terminus; palmitoylation promotes localization to the Golgi apparatus. Specifically expressed in skeletal muscle during embryogenesis and adult muscle regeneration.

The protein resides in the cell membrane. Its subcellular location is the golgi apparatus membrane. In terms of biological role, myoblast-specific protein that mediates myoblast fusion, an essential step for the formation of multi-nucleated muscle fibers. Actively participates in the membrane fusion reaction by mediating the mixing of cell membrane lipids (hemifusion) upstream of MYMX. Acts independently of MYMX. Involved in skeletal muscle regeneration in response to injury by mediating the fusion of satellite cells, a population of muscle stem cells, with injured myofibers. Also involved in skeletal muscle hypertrophy, probably by mediating the fusion of satellite cells with myofibers. The sequence is that of Protein myomaker from Mus musculus (Mouse).